Here is a 989-residue protein sequence, read N- to C-terminus: R3H domain-containing protein 2 (989 aa).

Disordered stretches follow at residues 23-71 (EESV…AKSN) and 106-147 (SCPS…QEYT). A compositionally biased stretch (basic and acidic residues) spans 36 to 56 (PSKEEIEKESEDTSLRQETQR). Ser-37 is subject to Phosphoserine. The segment covering 58 to 71 (TSNHGHARKRAKSN) has biased composition (basic residues). The segment covering 109–143 (SDKEEEKSTKDVSEKEDKDKNKEKVPRRMLSRDSS) has biased composition (basic and acidic residues). Ser-143 carries the post-translational modification Phosphoserine. Positions 169 to 232 (RMMLLKLEQE…AVIINKTSNT (64 aa)) constitute an R3H domain. The 71-residue stretch at 233-303 (RIPEQRFSEH…VRERIFARET (71 aa)) folds into the SUZ domain. Disordered stretches follow at residues 267–288 (DDNQ…EERE), 306–390 (NGYL…ISRP), 416–479 (TAQQ…FQPP), 493–524 (ASTG…GYMQ), 674–738 (GTSP…PSMV), 751–793 (RGQK…SLSN), and 848–867 (QGQS…LKSA). The segment covering 277 to 288 (DGRRSKSIEERE) has biased composition (basic and acidic residues). Low complexity predominate over residues 320 to 331 (SRTSSSRQSSTD). 3 positions are modified to phosphoserine: Ser-344, Ser-347, and Ser-363. The span at 416–428 (TAQQQQQQQQQLP) shows a compositional bias: low complexity. 2 stretches are compositionally biased toward polar residues: residues 454–466 (PFGQ…QGST) and 493–517 (ASTG…QQVL). The segment covering 695–704 (SPSPCSPPQM) has biased composition (pro residues). A compositionally biased stretch (low complexity) spans 705 to 727 (PQQYSGVSPSGPGVVVMQLNVPN). Residues 761 to 771 (PESSPQANTQM) are compositionally biased toward polar residues. Positions 772–790 (SSSPVTSPTQSPAPSPVTS) are enriched in low complexity. 2 positions are modified to phosphoserine: Ser-866 and Ser-868. 2 positions are modified to phosphothreonine: Thr-869 and Thr-873.

It is found in the nucleus. This Bos taurus (Bovine) protein is R3H domain-containing protein 2 (R3HDM2).